The sequence spans 420 residues: L-cysteine:1D-myo-inositol 2-amino-2-deoxy-alpha-D-glucopyranoside ligase (420 aa).

Cysteine 46 is a Zn(2+) binding site. Residues 46–49 (CGIT), threonine 61, and 84–86 (NVT) each bind L-cysteinyl-5'-AMP. Positions 48–58 (ITPYDSTHLGH) match the 'HIGH' region motif. The short motif at 194–199 (ERGGDP) is the 'ERGGDP' region element. Tryptophan 235 contributes to the L-cysteinyl-5'-AMP binding site. Position 239 (cysteine 239) interacts with Zn(2+). Residue 257–259 (GTD) participates in L-cysteinyl-5'-AMP binding. Histidine 264 is a binding site for Zn(2+). An L-cysteinyl-5'-AMP-binding site is contributed by valine 291. A 'KMSKS' region motif is present at residues 297 to 301 (KMSKS).

Belongs to the class-I aminoacyl-tRNA synthetase family. MshC subfamily. Monomer. The cofactor is Zn(2+).

The catalysed reaction is 1D-myo-inositol 2-amino-2-deoxy-alpha-D-glucopyranoside + L-cysteine + ATP = 1D-myo-inositol 2-(L-cysteinylamino)-2-deoxy-alpha-D-glucopyranoside + AMP + diphosphate + H(+). Functionally, catalyzes the ATP-dependent condensation of GlcN-Ins and L-cysteine to form L-Cys-GlcN-Ins. The sequence is that of L-cysteine:1D-myo-inositol 2-amino-2-deoxy-alpha-D-glucopyranoside ligase from Beutenbergia cavernae (strain ATCC BAA-8 / DSM 12333 / CCUG 43141 / JCM 11478 / NBRC 16432 / NCIMB 13614 / HKI 0122).